The chain runs to 311 residues: Taste receptor type 2 member 9 (311 aa).

Over M1–Y9 the chain is Extracellular. The chain crosses the membrane as a helical span at residues I10–C32. Residues I33–A52 lie on the Cytoplasmic side of the membrane. A helical membrane pass occupies residues I53–F72. Residues P73–D86 are Extracellular-facing. A helical transmembrane segment spans residues A87–L109. The Cytoplasmic segment spans residues K110 to K128. A helical membrane pass occupies residues V129–F146. Residues P147–Q179 are Extracellular-facing. Residue N163 is glycosylated (N-linked (GlcNAc...) asparagine). The helical transmembrane segment at L180–F202 threads the bilayer. The Cytoplasmic segment spans residues S203–V233. Residues I234–I256 traverse the membrane as a helical segment. Over P257–K260 the chain is Extracellular. The chain crosses the membrane as a helical span at residues L261–M283. Over G284–P311 the chain is Cytoplasmic.

Belongs to the G-protein coupled receptor T2R family.

It localises to the membrane. Functionally, gustducin-coupled receptor implicated in the perception of bitter compounds in the oral cavity and the gastrointestinal tract. Signals through PLCB2 and the calcium-regulated cation channel TRPM5. The sequence is that of Taste receptor type 2 member 9 (TAS2R9) from Papio hamadryas (Hamadryas baboon).